A 252-amino-acid chain; its full sequence is Flagellar brake protein YcgR (252 aa).

Residues 118 to 236 (QRREYFRVSI…EKGLQRAIFE (119 aa)) form the PilZ domain.

It belongs to the YcgR family. Monomer. Interacts with the flagellar basal bodies.

The protein resides in the bacterial flagellum basal body. Its function is as follows. Acts as a flagellar brake, regulating swimming and swarming in a bis-(3'-5') cyclic diguanylic acid (c-di-GMP)-dependent manner. Binds 1 c-di-GMP dimer per subunit. Increasing levels of c-di-GMP lead to decreased motility. This chain is Flagellar brake protein YcgR, found in Yersinia pseudotuberculosis serotype I (strain IP32953).